The sequence spans 282 residues: Elongation factor Ts (282 aa).

Residues 79–82 (TDFV) are involved in Mg(2+) ion dislocation from EF-Tu.

It belongs to the EF-Ts family.

The protein localises to the cytoplasm. Associates with the EF-Tu.GDP complex and induces the exchange of GDP to GTP. It remains bound to the aminoacyl-tRNA.EF-Tu.GTP complex up to the GTP hydrolysis stage on the ribosome. The protein is Elongation factor Ts of Shewanella sediminis (strain HAW-EB3).